Consider the following 482-residue polypeptide: Proline--tRNA ligase (482 aa).

This sequence belongs to the class-II aminoacyl-tRNA synthetase family. ProS type 3 subfamily. As to quaternary structure, homodimer.

The protein resides in the cytoplasm. It catalyses the reaction tRNA(Pro) + L-proline + ATP = L-prolyl-tRNA(Pro) + AMP + diphosphate. Catalyzes the attachment of proline to tRNA(Pro) in a two-step reaction: proline is first activated by ATP to form Pro-AMP and then transferred to the acceptor end of tRNA(Pro). The sequence is that of Proline--tRNA ligase from Thermofilum pendens (strain DSM 2475 / Hrk 5).